The primary structure comprises 352 residues: Histidinol-phosphate aminotransferase (352 aa).

Lysine 221 carries the post-translational modification N6-(pyridoxal phosphate)lysine.

Belongs to the class-II pyridoxal-phosphate-dependent aminotransferase family. Histidinol-phosphate aminotransferase subfamily. As to quaternary structure, homodimer. Pyridoxal 5'-phosphate serves as cofactor.

The enzyme catalyses L-histidinol phosphate + 2-oxoglutarate = 3-(imidazol-4-yl)-2-oxopropyl phosphate + L-glutamate. The protein operates within amino-acid biosynthesis; L-histidine biosynthesis; L-histidine from 5-phospho-alpha-D-ribose 1-diphosphate: step 7/9. The chain is Histidinol-phosphate aminotransferase from Staphylococcus aureus (strain Mu3 / ATCC 700698).